A 227-amino-acid polypeptide reads, in one-letter code: Cytochrome c oxidase subunit 2 (227 aa).

Over 1-14 the chain is Mitochondrial intermembrane; sequence MANHSQLGFQDASS. Residues 15-45 form a helical membrane-spanning segment; sequence PIMEELVEFHDHALMVALAICSLVLYLLTLM. Over 46–58 the chain is Mitochondrial matrix; that stretch reads LTQKLSSNTVDAQ. A helical membrane pass occupies residues 59 to 86; that stretch reads EVELIWTILPAIVLVLLALPSLQILYMM. The Mitochondrial intermembrane segment spans residues 87–227; the sequence is DEIEEPDLTL…FETWSSLLSS (141 aa). Cu cation-binding residues include His-160, Cys-195, Glu-197, Cys-199, His-203, and Met-206. Glu-197 is a binding site for Mg(2+).

The protein belongs to the cytochrome c oxidase subunit 2 family. As to quaternary structure, component of the cytochrome c oxidase (complex IV, CIV), a multisubunit enzyme composed of 14 subunits. The complex is composed of a catalytic core of 3 subunits MT-CO1, MT-CO2 and MT-CO3, encoded in the mitochondrial DNA, and 11 supernumerary subunits COX4I, COX5A, COX5B, COX6A, COX6B, COX6C, COX7A, COX7B, COX7C, COX8 and NDUFA4, which are encoded in the nuclear genome. The complex exists as a monomer or a dimer and forms supercomplexes (SCs) in the inner mitochondrial membrane with NADH-ubiquinone oxidoreductase (complex I, CI) and ubiquinol-cytochrome c oxidoreductase (cytochrome b-c1 complex, complex III, CIII), resulting in different assemblies (supercomplex SCI(1)III(2)IV(1) and megacomplex MCI(2)III(2)IV(2)). Found in a complex with TMEM177, COA6, COX18, COX20, SCO1 and SCO2. Interacts with TMEM177 in a COX20-dependent manner. Interacts with COX20. Interacts with COX16. Cu cation serves as cofactor.

The protein resides in the mitochondrion inner membrane. The enzyme catalyses 4 Fe(II)-[cytochrome c] + O2 + 8 H(+)(in) = 4 Fe(III)-[cytochrome c] + 2 H2O + 4 H(+)(out). In terms of biological role, component of the cytochrome c oxidase, the last enzyme in the mitochondrial electron transport chain which drives oxidative phosphorylation. The respiratory chain contains 3 multisubunit complexes succinate dehydrogenase (complex II, CII), ubiquinol-cytochrome c oxidoreductase (cytochrome b-c1 complex, complex III, CIII) and cytochrome c oxidase (complex IV, CIV), that cooperate to transfer electrons derived from NADH and succinate to molecular oxygen, creating an electrochemical gradient over the inner membrane that drives transmembrane transport and the ATP synthase. Cytochrome c oxidase is the component of the respiratory chain that catalyzes the reduction of oxygen to water. Electrons originating from reduced cytochrome c in the intermembrane space (IMS) are transferred via the dinuclear copper A center (CU(A)) of subunit 2 and heme A of subunit 1 to the active site in subunit 1, a binuclear center (BNC) formed by heme A3 and copper B (CU(B)). The BNC reduces molecular oxygen to 2 water molecules using 4 electrons from cytochrome c in the IMS and 4 protons from the mitochondrial matrix. The protein is Cytochrome c oxidase subunit 2 (MT-CO2) of Coturnix japonica (Japanese quail).